The chain runs to 262 residues: ATP synthase subunit a (262 aa).

Transmembrane regions (helical) follow at residues 32-52 (IAFTNSAAWMALTTVLLAVFV), 98-118 (LFMFILFGNLLGLLPLGVLGI), 127-147 (FTITGVLAIISFSIVLIVGFW), 153-173 (FFSLFVPSGTPLPMIPIIFPI), 189-209 (LFVAMMAGHVLLKVLSSFVID), and 219-239 (LLVGAPSFILMIGISALEILV).

The protein belongs to the ATPase A chain family. In terms of assembly, F-type ATPases have 2 components, CF(1) - the catalytic core - and CF(0) - the membrane proton channel. CF(1) has five subunits: alpha(3), beta(3), gamma(1), delta(1), epsilon(1). CF(0) has four main subunits: a, b, b' and c.

Its subcellular location is the cell inner membrane. Its function is as follows. Key component of the proton channel; it plays a direct role in the translocation of protons across the membrane. The protein is ATP synthase subunit a of Erythrobacter litoralis (strain HTCC2594).